We begin with the raw amino-acid sequence, 243 residues long: Adenosylcobinamide-GDP ribazoletransferase (243 aa).

5 helical membrane-spanning segments follow: residues 31–51, 57–77, 109–129, 135–155, and 188–208; these read LLFY…FSAL, LMLH…GLHL, IAVV…LALI, IGLL…FLGT, and VLLA…CFFW.

Belongs to the CobS family. Mg(2+) is required as a cofactor.

It localises to the cell inner membrane. The enzyme catalyses alpha-ribazole + adenosylcob(III)inamide-GDP = adenosylcob(III)alamin + GMP + H(+). It catalyses the reaction alpha-ribazole 5'-phosphate + adenosylcob(III)inamide-GDP = adenosylcob(III)alamin 5'-phosphate + GMP + H(+). It participates in cofactor biosynthesis; adenosylcobalamin biosynthesis; adenosylcobalamin from cob(II)yrinate a,c-diamide: step 7/7. In terms of biological role, joins adenosylcobinamide-GDP and alpha-ribazole to generate adenosylcobalamin (Ado-cobalamin). Also synthesizes adenosylcobalamin 5'-phosphate from adenosylcobinamide-GDP and alpha-ribazole 5'-phosphate. In Pseudomonas savastanoi pv. phaseolicola (strain 1448A / Race 6) (Pseudomonas syringae pv. phaseolicola (strain 1448A / Race 6)), this protein is Adenosylcobinamide-GDP ribazoletransferase.